Consider the following 427-residue polypeptide: Enolase (427 aa).

Glutamine 162 serves as a coordination point for (2R)-2-phosphoglycerate. Glutamate 204 functions as the Proton donor in the catalytic mechanism. Residues aspartate 241, glutamate 284, and aspartate 311 each contribute to the Mg(2+) site. Residues lysine 336, arginine 365, serine 366, and lysine 387 each coordinate (2R)-2-phosphoglycerate. Lysine 336 (proton acceptor) is an active-site residue.

The protein belongs to the enolase family. The cofactor is Mg(2+).

Its subcellular location is the cytoplasm. It localises to the secreted. The protein resides in the cell surface. It carries out the reaction (2R)-2-phosphoglycerate = phosphoenolpyruvate + H2O. It functions in the pathway carbohydrate degradation; glycolysis; pyruvate from D-glyceraldehyde 3-phosphate: step 4/5. Functionally, catalyzes the reversible conversion of 2-phosphoglycerate (2-PG) into phosphoenolpyruvate (PEP). It is essential for the degradation of carbohydrates via glycolysis. This chain is Enolase, found in Corynebacterium kroppenstedtii (strain DSM 44385 / JCM 11950 / CIP 105744 / CCUG 35717).